The primary structure comprises 445 residues: MSYFGTDGIRGKFGQMPITPEFALKLGFAAGKVLKRTSPKNKPLVVLGKDTRLSGYILESALQAGLNAAGVYVHLLGPLPTPAIAHLTRALHAHAGIVISASHNPYFDNGIKFFSSEGKKLPDSLQEEINKELEKDLFIEDTANLGKSVRVTDANGRYIEFCKSTFPYHFDLNNLKIVVDCAHGAAYSVGPSVFRELGAKVVALYNEPDGLNINENCGSTHPESLQKAVVEHGADLGIAFDGDADRVVMVDKFGNLIDGDHILYILATQAKNKPAGVVGTVMSNMALEVALEKANVGFVRAKVGDRYVLQALEENGWVTGGEPSGHILTLDKSTTGDAIIAALQVLTVMVEQNKALHELVHDFKLYPQVLVNVRLEQMLDPYSIPALVAEFNKAEEQLKGRGRILIRKSGTEPVIRVMVEGDNEQEVKTLAEHLANAVRSQAQVA.

The Phosphoserine intermediate role is filled by Ser-102. Positions 102, 241, 243, and 245 each coordinate Mg(2+). The residue at position 102 (Ser-102) is a Phosphoserine.

The protein belongs to the phosphohexose mutase family. It depends on Mg(2+) as a cofactor. Activated by phosphorylation.

The catalysed reaction is alpha-D-glucosamine 1-phosphate = D-glucosamine 6-phosphate. Its function is as follows. Catalyzes the conversion of glucosamine-6-phosphate to glucosamine-1-phosphate. This is Phosphoglucosamine mutase from Acinetobacter baumannii (strain SDF).